A 217-amino-acid chain; its full sequence is Probable transaldolase (217 aa).

Lysine 83 functions as the Schiff-base intermediate with substrate in the catalytic mechanism.

It belongs to the transaldolase family. Type 3B subfamily.

The protein resides in the cytoplasm. It catalyses the reaction D-sedoheptulose 7-phosphate + D-glyceraldehyde 3-phosphate = D-erythrose 4-phosphate + beta-D-fructose 6-phosphate. The protein operates within carbohydrate degradation; pentose phosphate pathway; D-glyceraldehyde 3-phosphate and beta-D-fructose 6-phosphate from D-ribose 5-phosphate and D-xylulose 5-phosphate (non-oxidative stage): step 2/3. Its function is as follows. Transaldolase is important for the balance of metabolites in the pentose-phosphate pathway. The polypeptide is Probable transaldolase (Brucella anthropi (strain ATCC 49188 / DSM 6882 / CCUG 24695 / JCM 21032 / LMG 3331 / NBRC 15819 / NCTC 12168 / Alc 37) (Ochrobactrum anthropi)).